Here is a 383-residue protein sequence, read N- to C-terminus: Dimethylsulfoniopropionate lyase 6 (383 aa).

The protein belongs to the aspartate/glutamate racemases family. ALMA1 subfamily. In terms of assembly, homotetramer.

It carries out the reaction S,S-dimethyl-beta-propiothetin = acrylate + dimethyl sulfide + H(+). Functionally, mediates cleavage of dimethylsulfoniopropionate (DMSP) into dimethyl sulfide (DMS) and acrylate. DMS is the principal form by which sulfur is transported from oceans to the atmosphere and is a key component of the ocean sulfur cycle. The chain is Dimethylsulfoniopropionate lyase 6 from Emiliania huxleyi (strain CCMP1516).